A 188-amino-acid chain; its full sequence is Elongation factor P-like protein (188 aa).

The protein belongs to the elongation factor P family.

This Vibrio cholerae serotype O1 (strain ATCC 39541 / Classical Ogawa 395 / O395) protein is Elongation factor P-like protein.